Consider the following 713-residue polypeptide: MLKKEYLKNPYLVLFAMIILAYVFSVLCRFYWIWWASEFNEYFFNNQLMIISNDGYAFAEGARDMIAGFHQPNDLSYYGSSLSTLTYWLYKITPFSFESIILYMSTFLSSLVVIPIILLANEYKRPLMGFVAALLASVANSYYNRTMSGYYDTDMLVIVLPMFILFFMVRMILKKDFFSLIALPLFIGIYLWWYPSSYTLNVALIGLFLIYTLIFHRKEKIFYIAVILSSLTLSNIAWFYQSAIIVILFALFALEQKRLNFMIIGILGSATLIFLILSGGVDPILYQLKFYIFRNDESANLTQGFMYFNVNQTIQEVENVDFSEFMRRISGSEIVFLFSLFGFVWLLRKHKSMIMALPILVLGFLALKGGLRFTIYSVPVMALGFGFLLSEFKAILVKKYSQLTSNVCIVFATILTLAPVFIHIYNYKAPTVFSQNEASLLNQLKNIANREDYVVTWWDYGYPVRYYSDVKTLVDGGKHLGKDNFFPSFALSKDEQAAANMARLSVEYTEKSFYAPQNDILKSDILQAMMKDYNQSNVDLFLASLSKPDFKIDTPKTRDIYLYMPARMSLIFSTVASFSFINLDTGVLDKPFTFSTAYPLDVKNGEIYLSNGVVLSDDFRSFKIGDNVVSVNSIVEINSIKQGEYKITPIDDKAQFYIFYLKDSAIPYAQFILMDKTMFNSAYVQMFFLGNYDKNLFDLVINSRDAKVFKLKI.

The Cytoplasmic segment spans residues 1–11 (MLKKEYLKNPY). The chain crosses the membrane as a helical span at residues 12 to 35 (LVLFAMIILAYVFSVLCRFYWIWW). Over 36 to 96 (ASEFNEYFFN…YWLYKITPFS (61 aa)) the chain is Periplasmic. Residues 52–54 (SND) carry the DXD motif 1 motif. Mn(2+) is bound at residue Asp54. Residues 97-122 (FESIILYMSTFLSSLVVIPIILLANE) traverse the membrane as a helical segment. Topologically, residues 123-125 (YKR) are cytoplasmic. Residues 126-144 (PLMGFVAALLASVANSYYN) traverse the membrane as a helical segment. The Periplasmic portion of the chain corresponds to 145-152 (RTMSGYYD). Residue Asp152 participates in Mn(2+) binding. Positions 152–154 (DTD) match the DXD motif 2 motif. The chain crosses the membrane as a helical span at residues 153–174 (TDMLVIVLPMFILFFMVRMILK). The Cytoplasmic portion of the chain corresponds to 175 to 176 (KD). Residues 177-192 (FFSLIALPLFIGIYLW) traverse the membrane as a helical segment. Over 193-197 (WYPSS) the chain is Periplasmic. A [alpha-D-GalNAc-(1-&gt;4)]2-[beta-D-Glc-(1-&gt;3)]-[alpha-D-GalNAc-(1-&gt;4)]2-alpha-D-GalNAc-(1-&gt;3)-alpha-D-diNAcBac-tri-trans,hepta-cis-undecaprenyl diphosphate-binding site is contributed by 194–196 (YPS). The helical transmembrane segment at 198–215 (YTLNVALIGLFLIYTLIF) threads the bilayer. Residues 216 to 220 (HRKEK) lie on the Cytoplasmic side of the membrane. Residues 221–233 (IFYIAVILSSLTL) form a helical membrane-spanning segment. Residues 234–237 (SNIA) are Periplasmic-facing. Residues 238-254 (WFYQSAIIVILFALFAL) form a helical membrane-spanning segment. Residues 255–260 (EQKRLN) are Cytoplasmic-facing. Residues 261 to 278 (FMIIGILGSATLIFLILS) traverse the membrane as a helical segment. Residues 279–324 (GGVDPILYQLKFYIFRNDESANLTQGFMYFNVNQTIQEVENVDFSE) are Periplasmic-facing. Residue Tyr291 participates in [alpha-D-GalNAc-(1-&gt;4)]2-[beta-D-Glc-(1-&gt;3)]-[alpha-D-GalNAc-(1-&gt;4)]2-alpha-D-GalNAc-(1-&gt;3)-alpha-D-diNAcBac-tri-trans,hepta-cis-undecaprenyl diphosphate binding. Residues 313–316 (TIQE) carry the TIXE motif motif. Residue Glu316 participates in Mn(2+) binding. A helical transmembrane segment spans residues 325-347 (FMRRISGSEIVFLFSLFGFVWLL). Residues 348–352 (RKHKS) are Cytoplasmic-facing. A helical membrane pass occupies residues 353 to 369 (MIMALPILVLGFLALKG). The Periplasmic segment spans residues 370–373 (GLRF). Arg372 is a [alpha-D-GalNAc-(1-&gt;4)]2-[beta-D-Glc-(1-&gt;3)]-[alpha-D-GalNAc-(1-&gt;4)]2-alpha-D-GalNAc-(1-&gt;3)-alpha-D-diNAcBac-tri-trans,hepta-cis-undecaprenyl diphosphate binding site. The helical transmembrane segment at 374 to 396 (TIYSVPVMALGFGFLLSEFKAIL) threads the bilayer. Over 397-406 (VKKYSQLTSN) the chain is Cytoplasmic. The helical transmembrane segment at 407–427 (VCIVFATILTLAPVFIHIYNY) threads the bilayer. At 428–713 (KAPTVFSQNE…RDAKVFKLKI (286 aa)) the chain is on the periplasmic side. Residues 457-459 (WWD) form an interacts with target acceptor peptide in protein substrate region. The WWDYG motif motif lies at 457 to 461 (WWDYG). Tyr462 serves as a coordination point for [alpha-D-GalNAc-(1-&gt;4)]2-[beta-D-Glc-(1-&gt;3)]-[alpha-D-GalNAc-(1-&gt;4)]2-alpha-D-GalNAc-(1-&gt;3)-alpha-D-diNAcBac-tri-trans,hepta-cis-undecaprenyl diphosphate. An N-linked (DATDGlc) asparagine glycan is attached at Asn534. The MI motif signature appears at 568–575 (MSLIFSTV).

The protein belongs to the STT3 family. Mg(2+) serves as cofactor. Mn(2+) is required as a cofactor.

The protein localises to the cell inner membrane. The catalysed reaction is tritrans,heptacis-undecaprenyl diphosphooligosaccharide + [protein]-L-asparagine = tritrans,heptacis-undecaprenyl diphosphate + a glycoprotein with the oligosaccharide chain attached by N-beta-D-glycosyl linkage to protein L-asparagine.. It participates in protein modification; protein glycosylation. Functionally, oligosaccharyltransferase that catalyzes the transfer of a preassembled heptasaccharide from a lipid donor to an asparagine residue in nascent polypeptide chains, affording a beta-linked glycan to the asparagine side chain of target proteins. Oligosaccharyl transferase (OST) that catalyzes the initial transfer of a defined glycan (GalNAc(2)GlcGalNAc(3)Bac(NAc)(2) in eubacteria, where Bac(NAc)(2) is di-N-acetyl bacillosamine) from the lipid carrier undecaprenol-pyrophosphate to an asparagine residue within an Asp/Glu-Asn-X-Ser/Thr consensus motif in nascent polypeptide chains, the first step in protein N-glycosylation. The protein is Undecaprenyl-diphosphooligosaccharide--protein glycotransferase (pglB) of Campylobacter jejuni (strain RM1221).